We begin with the raw amino-acid sequence, 245 residues long: tRNA1(Val) (adenine(37)-N6)-methyltransferase (245 aa).

The protein belongs to the methyltransferase superfamily. tRNA (adenine-N(6)-)-methyltransferase family.

Its subcellular location is the cytoplasm. It catalyses the reaction adenosine(37) in tRNA1(Val) + S-adenosyl-L-methionine = N(6)-methyladenosine(37) in tRNA1(Val) + S-adenosyl-L-homocysteine + H(+). Specifically methylates the adenine in position 37 of tRNA(1)(Val) (anticodon cmo5UAC). This is tRNA1(Val) (adenine(37)-N6)-methyltransferase from Salmonella enteritidis PT4 (strain P125109).